Reading from the N-terminus, the 200-residue chain is Superoxide dismutase [Mn], mitochondrial (200 aa).

Residues His27, His72, Asp157, and His161 each coordinate Mn(2+).

The protein belongs to the iron/manganese superoxide dismutase family. The cofactor is Mn(2+).

The protein localises to the mitochondrion matrix. It carries out the reaction 2 superoxide + 2 H(+) = H2O2 + O2. Functionally, destroys superoxide anion radicals which are normally produced within the cells and which are toxic to biological systems. The polypeptide is Superoxide dismutase [Mn], mitochondrial (sod) (Agaricus bisporus (White button mushroom)).